Here is a 211-residue protein sequence, read N- to C-terminus: Probable nicotinate-nucleotide adenylyltransferase (211 aa).

This sequence belongs to the NadD family.

It carries out the reaction nicotinate beta-D-ribonucleotide + ATP + H(+) = deamido-NAD(+) + diphosphate. The protein operates within cofactor biosynthesis; NAD(+) biosynthesis; deamido-NAD(+) from nicotinate D-ribonucleotide: step 1/1. Functionally, catalyzes the reversible adenylation of nicotinate mononucleotide (NaMN) to nicotinic acid adenine dinucleotide (NaAD). The chain is Probable nicotinate-nucleotide adenylyltransferase from Legionella pneumophila (strain Paris).